A 1015-amino-acid chain; its full sequence is Collagen alpha-2(I) chain (1015 aa).

The interval 1 to 1015 (SGGFDFSFLP…FGYEGDFYRA (1015 aa)) is disordered. Pro-10 and Pro-13 each carry 4-hydroxyproline. The segment covering 20 to 30 (KGVGLGPGPMG) has biased composition (gly residues). Pro-38 is subject to 4-hydroxyproline. Positions 43–69 (QGPAGEPGEPGQTGPAGARGPAGPPGK) are enriched in low complexity. Over residues 70 to 84 (AGEDGHPGKPGRPGE) the composition is skewed to basic and acidic residues. Residue Lys-106 is modified to 5-hydroxylysine; alternate. A glycan (O-linked (Gal...) hydroxylysine; alternate) is linked at Lys-106. Low complexity-rich tracts occupy residues 140 to 169 (VGAPGPAGARGSDGSVGPVGPAGPIGSAGP), 194 to 208 (AGPRGEQGLPGVSGP), and 235 to 250 (PGPVGAVGATGARGLV). Residues 302–311 (GLRGGPGSRG) show a composition bias toward gly residues. Residues 324-340 (PAGSRGASGPAGVRGPS) are compositionally biased toward low complexity. 4-hydroxyproline occurs at positions 346 and 349. A compositionally biased stretch (gly residues) spans 441-450 (GVQGGKGEQG). Positions 497–514 (PGESGAAGPVGPIGSRGP) are enriched in low complexity. Gly residues predominate over residues 534 to 545 (GTAGPGSGGLPG). Low complexity-rich tracts occupy residues 568 to 612 (VGTT…PRGS) and 619 to 639 (VGPAGPNGFAGPAGAAGQPGA). Residues 640–649 (KGERGTKGPK) are compositionally biased toward basic and acidic residues. Residues 657–670 (PTGPVGAAGPSGPN) are compositionally biased toward low complexity. The segment covering 674–686 (GPAGGRGDGGPPG) has biased composition (gly residues). The span at 687–697 (LTGFPGAAGRT) shows a compositional bias: low complexity. Residues 734-743 (GETGAGGPPG) are compositionally biased toward gly residues. Low complexity-rich tracts occupy residues 751-778 (SGEPGTAGPPGTAGPQGLLGAPGILGLP), 786-799 (LPGVAGAVGEPGPL), 846-868 (YAGNAGPVGAAGAPGPHGTVGPA), and 877-897 (PGPAGSVGPVGAVGPRGPSGP). The span at 901–912 (RGDKGEAGDKGP) shows a compositional bias: basic and acidic residues. Residues 987–997 (PAGPPGPPGPP) show a composition bias toward pro residues.

It belongs to the fibrillar collagen family. As to quaternary structure, trimers of one alpha 2(I) and two alpha 1(I) chains. Interacts (via C-terminus) with TMEM131 (via PapD-L domain); the interaction is direct and is involved in assembly and TRAPPIII ER-to-Golgi transport complex-dependent secretion of collagen. Prolines at the third position of the tripeptide repeating unit (G-X-Y) are hydroxylated in some or all of the chains. Expressed in bones.

It is found in the secreted. Its subcellular location is the extracellular space. The protein localises to the extracellular matrix. Its function is as follows. Type I collagen is a member of group I collagen (fibrillar forming collagen). This Doedicurus sp. (South American giant glyptodont) protein is Collagen alpha-2(I) chain.